The following is a 166-amino-acid chain: NADPH-dependent 7-cyano-7-deazaguanine reductase (166 aa).

Cys57 (thioimide intermediate) is an active-site residue. The active-site Proton donor is Asp64. Residues 79-81 (VES) and 98-99 (HE) each bind substrate.

The protein belongs to the GTP cyclohydrolase I family. QueF type 1 subfamily.

The protein resides in the cytoplasm. The enzyme catalyses 7-aminomethyl-7-carbaguanine + 2 NADP(+) = 7-cyano-7-deazaguanine + 2 NADPH + 3 H(+). It functions in the pathway tRNA modification; tRNA-queuosine biosynthesis. Catalyzes the NADPH-dependent reduction of 7-cyano-7-deazaguanine (preQ0) to 7-aminomethyl-7-deazaguanine (preQ1). The sequence is that of NADPH-dependent 7-cyano-7-deazaguanine reductase from Staphylococcus epidermidis (strain ATCC 35984 / DSM 28319 / BCRC 17069 / CCUG 31568 / BM 3577 / RP62A).